Reading from the N-terminus, the 156-residue chain is Protein FAM162A (156 aa).

The tract at residues 37-57 is disordered; the sequence is TNGFCSKPQESPKPPDQHTYS. The required for proapoptotic activity stretch occupies residues 78–104; it reads RFKKEDEIPETVSFEMLDAAKNKVRVK. The chain crosses the membrane as a helical span at residues 105 to 122; it reads ISYVMIALTVAGCVLMVI.

This sequence belongs to the UPF0389 family. As to quaternary structure, interacts with HSP90AB1; HSP90AB1 is essential for FAM162A mitochondrial localization and pro-apoptotic activity. Interacts with VDAC2; the interaction is probably involved in inducing mitochondrial permeability transition.

The protein localises to the mitochondrion membrane. In terms of biological role, proposed to be involved in regulation of apoptosis; the exact mechanism may differ between cell types/tissues. May be involved in hypoxia-induced cell death of transformed cells implicating cytochrome C release and caspase activation (such as CASP9) and inducing mitochondrial permeability transition. May be involved in hypoxia-induced cell death of neuronal cells probably by promoting release of AIFM1 from mitochondria to cytoplasm and its translocation to the nucleus; however, the involvement of caspases has been reported conflictingly. The protein is Protein FAM162A (FAM162A) of Bos taurus (Bovine).